A 388-amino-acid polypeptide reads, in one-letter code: Succinate--CoA ligase [ADP-forming] subunit beta (388 aa).

An ATP-grasp domain is found at 9–245 (KELLKSYGLP…KSQENERELK (237 aa)). Residues Lys-46, 53 to 55 (GRG), Glu-100, Tyr-103, and Glu-108 each bind ATP. Residues Asn-200 and Asp-214 each coordinate Mg(2+). Substrate is bound by residues Asn-265 and 322–324 (GIV).

The protein belongs to the succinate/malate CoA ligase beta subunit family. As to quaternary structure, heterotetramer of two alpha and two beta subunits. It depends on Mg(2+) as a cofactor.

The catalysed reaction is succinate + ATP + CoA = succinyl-CoA + ADP + phosphate. The enzyme catalyses GTP + succinate + CoA = succinyl-CoA + GDP + phosphate. Its pathway is carbohydrate metabolism; tricarboxylic acid cycle; succinate from succinyl-CoA (ligase route): step 1/1. In terms of biological role, succinyl-CoA synthetase functions in the citric acid cycle (TCA), coupling the hydrolysis of succinyl-CoA to the synthesis of either ATP or GTP and thus represents the only step of substrate-level phosphorylation in the TCA. The beta subunit provides nucleotide specificity of the enzyme and binds the substrate succinate, while the binding sites for coenzyme A and phosphate are found in the alpha subunit. This Psychrobacter arcticus (strain DSM 17307 / VKM B-2377 / 273-4) protein is Succinate--CoA ligase [ADP-forming] subunit beta.